We begin with the raw amino-acid sequence, 407 residues long: Succinate--CoA ligase [ADP-forming] subunit beta, hydrogenosomal (407 aa).

The N-terminal 9 residues, methionine 1–asparagine 9, are a transit peptide targeting the hydrogenosome. An ATP-grasp domain is found at lysine 18–arginine 261. ATP-binding positions include lysine 55, glycine 62–glycine 64, and glutamate 124. Mg(2+)-binding residues include asparagine 216 and aspartate 230. Residues asparagine 281 and glycine 338–valine 340 contribute to the substrate site.

Belongs to the succinate/malate CoA ligase beta subunit family. As to quaternary structure, heterodimer of an alpha and a beta subunit. Requires Mg(2+) as cofactor.

Its subcellular location is the hydrogenosome. It catalyses the reaction succinate + ATP + CoA = succinyl-CoA + ADP + phosphate. Its pathway is carbohydrate metabolism; tricarboxylic acid cycle; succinate from succinyl-CoA (ligase route): step 1/1. Its function is as follows. Succinyl-CoA synthetase functions in the citric acid cycle (TCA), coupling the hydrolysis of succinyl-CoA to the synthesis of ATP and thus represents the only step of substrate-level phosphorylation in the TCA. The beta subunit provides nucleotide specificity of the enzyme and binds the substrate succinate, while the binding sites for coenzyme A and phosphate are found in the alpha subunit. The protein is Succinate--CoA ligase [ADP-forming] subunit beta, hydrogenosomal of Trichomonas vaginalis.